Reading from the N-terminus, the 141-residue chain is U1 small nuclear ribonucleoprotein C (141 aa).

The Matrin-type zinc-finger motif lies at 4–36 (YYCEYCDKYLTHDSPSVRKSHTIGKVHQQAVTL). The tract at residues 69–141 (LLPPNMVPGQ…SNSPPSNNDQ (73 aa)) is disordered. The span at 83-97 (MMPPGQFPFPPPPGQ) shows a compositional bias: pro residues. Low complexity-rich tracts occupy residues 100–110 (GGMPPHQQQPM) and 124–141 (QQSAQQFNSNSPPSNNDQ).

Belongs to the U1 small nuclear ribonucleoprotein C family. In terms of assembly, component of the U1 snRNP. The U1 snRNP is composed of the U1 snRNA and the 7 core Sm proteins SNRPB, SNRPD1, SNRPD2, SNRPD3, SNRPE, SNRPF and SNRPG that assemble in a heptameric protein ring on the Sm site of the small nuclear RNA to form the core snRNP, and at least 3 U1 snRNP-specific proteins SNRNP70/U1-70K, SNRPA/U1-A and SNRPC/U1-C. SNRPC/U1-C interacts with U1 snRNA and the 5' splice-site region of the pre-mRNA.

Its subcellular location is the nucleus. Functionally, component of the spliceosomal U1 snRNP, which is essential for recognition of the pre-mRNA 5' splice-site and the subsequent assembly of the spliceosome. SNRPC/U1-C is directly involved in initial 5' splice-site recognition for both constitutive and regulated alternative splicing. The interaction with the 5' splice-site seems to precede base-pairing between the pre-mRNA and the U1 snRNA. Stimulates commitment or early (E) complex formation by stabilizing the base pairing of the 5' end of the U1 snRNA and the 5' splice-site region. This is U1 small nuclear ribonucleoprotein C from Heterostelium pallidum (strain ATCC 26659 / Pp 5 / PN500) (Cellular slime mold).